The sequence spans 172 residues: Translation initiation factor IF-3 (172 aa).

This sequence belongs to the IF-3 family. Monomer.

It localises to the cytoplasm. Functionally, IF-3 binds to the 30S ribosomal subunit and shifts the equilibrium between 70S ribosomes and their 50S and 30S subunits in favor of the free subunits, thus enhancing the availability of 30S subunits on which protein synthesis initiation begins. The polypeptide is Translation initiation factor IF-3 (Campylobacter concisus (strain 13826)).